Consider the following 517-residue polypeptide: Steroid 17-alpha-hydroxylase/17,20 lyase (517 aa).

C451 serves as a coordination point for heme.

Belongs to the cytochrome P450 family. It depends on heme as a cofactor.

The protein localises to the membrane. The catalysed reaction is a C21-steroid + reduced [NADPH--hemoprotein reductase] + O2 = a 17alpha-hydroxy-C21-steroid + oxidized [NADPH--hemoprotein reductase] + H2O + H(+). It carries out the reaction 17alpha-hydroxyprogesterone + reduced [NADPH--hemoprotein reductase] + O2 = androst-4-ene-3,17-dione + acetate + oxidized [NADPH--hemoprotein reductase] + H2O + 2 H(+). It catalyses the reaction 17alpha-hydroxypregnenolone + reduced [NADPH--hemoprotein reductase] + O2 = 3beta-hydroxyandrost-5-en-17-one + acetate + oxidized [NADPH--hemoprotein reductase] + H2O + 2 H(+). The protein operates within lipid metabolism; steroid biosynthesis. Conversion of pregnenolone and progesterone to their 17-alpha-hydroxylated products and subsequently to dehydroepiandrosterone (DHEA) and androstenedione. Catalyzes both the 17-alpha-hydroxylation and the 17,20-lyase reaction. This chain is Steroid 17-alpha-hydroxylase/17,20 lyase (cyp17a1), found in Oryzias latipes (Japanese rice fish).